The chain runs to 356 residues: Glucan endo-1,3-beta-glucosidase, acidic isoform GL153 (356 aa).

Residues 1–29 (MALCIKNGFLAAALVLVGLLMCSIQMIGA) form the signal peptide. A Pyrrolidone carboxylic acid modification is found at Q30. A glycan (N-linked (GlcNAc...) asparagine) is linked at N95. Residue E124 is the Proton donor of the active site. E264 (nucleophile) is an active-site residue.

Belongs to the glycosyl hydrolase 17 family. Is expressed primarily in epidermal cell of healthy plant, and following induction by ethylene, accumulates in mesophyll cells.

The protein localises to the secreted. Its subcellular location is the extracellular space. The catalysed reaction is Hydrolysis of (1-&gt;3)-beta-D-glucosidic linkages in (1-&gt;3)-beta-D-glucans.. Its function is as follows. Is thought to be an important plant defense-related product against fungal pathogens. This Nicotiana tabacum (Common tobacco) protein is Glucan endo-1,3-beta-glucosidase, acidic isoform GL153 (GGL4).